The chain runs to 109 residues: Enhancer of rudimentary homolog (109 aa).

This sequence belongs to the E(R) family. As to quaternary structure, homodimer.

May have a role in the cell cycle. This Arabidopsis thaliana (Mouse-ear cress) protein is Enhancer of rudimentary homolog.